The following is a 120-amino-acid chain: uncharacterized protein (120 aa).

It is found in the mitochondrion. This is an uncharacterized protein from Arabidopsis thaliana (Mouse-ear cress).